A 48-amino-acid polypeptide reads, in one-letter code: Protein TUNAR (48 aa).

The segment at 1 to 20 is disordered; the sequence is MVITSENDEDRGGQEKESKE. Over residues 10–20 the composition is skewed to basic and acidic residues; the sequence is DRGGQEKESKE. Residues 24–44 traverse the membrane as a helical segment; that stretch reads LAMLGIIGTILNLIVIIFVYI.

As to quaternary structure, interacts with ATPase ATP2A2/SERCA2. Interacts with ATPase ATP2A3/SERCA3; the interaction occurs at low levels in low glucose conditions and is increased by high glucose levels. Highly expressed in pancreatic islets where it is enriched in the insulin-producing beta cells.

The protein resides in the endoplasmic reticulum membrane. Its subcellular location is the extracellular vesicle membrane. Functionally, in neurons, plays a role in the regulation of intracellular Ca(2+), possibly by acting as an activator of ATP2A2/SERCA2, thus increasing the efficiency with which Ca(2+) is removed from the cytoplasm. Inhibits differentiation of embryonic stem cells into neurons and inhibits neurite outgrowth, likely as a result of its role in intracellular Ca(2+) regulation. In pancreatic beta cells, lowers Ca(2+) levels in the endoplasmic reticulum and enhances glucose-stimulated insulin secretion. In Homo sapiens (Human), this protein is Protein TUNAR.